Here is a 120-residue protein sequence, read N- to C-terminus: Large ribosomal subunit protein uL18 (120 aa).

It belongs to the universal ribosomal protein uL18 family. In terms of assembly, part of the 50S ribosomal subunit; part of the 5S rRNA/L5/L18/L25 subcomplex. Contacts the 5S and 23S rRNAs.

Functionally, this is one of the proteins that bind and probably mediate the attachment of the 5S RNA into the large ribosomal subunit, where it forms part of the central protuberance. The protein is Large ribosomal subunit protein uL18 of Bacillus cytotoxicus (strain DSM 22905 / CIP 110041 / 391-98 / NVH 391-98).